Consider the following 358-residue polypeptide: Phospho-N-acetylmuramoyl-pentapeptide-transferase (358 aa).

10 helical membrane-spanning segments follow: residues 27–47 (LFNN…SLFA), 81–101 (MGGV…TINL), 106–126 (LFLL…DDYL), 147–167 (VISI…PLVI), 171–191 (SWVI…LVGI), 201–221 (LDGL…TEIL), 228–248 (LFVF…FLKY), 255–275 (IFMG…IALL), 278–298 (SVFT…SVII), and 336–356 (IVEN…VLKI).

Belongs to the glycosyltransferase 4 family. MraY subfamily. The cofactor is Mg(2+).

Its subcellular location is the cell inner membrane. It carries out the reaction UDP-N-acetyl-alpha-D-muramoyl-L-alanyl-gamma-D-glutamyl-meso-2,6-diaminopimeloyl-D-alanyl-D-alanine + di-trans,octa-cis-undecaprenyl phosphate = di-trans,octa-cis-undecaprenyl diphospho-N-acetyl-alpha-D-muramoyl-L-alanyl-D-glutamyl-meso-2,6-diaminopimeloyl-D-alanyl-D-alanine + UMP. It participates in cell wall biogenesis; peptidoglycan biosynthesis. Catalyzes the initial step of the lipid cycle reactions in the biosynthesis of the cell wall peptidoglycan: transfers peptidoglycan precursor phospho-MurNAc-pentapeptide from UDP-MurNAc-pentapeptide onto the lipid carrier undecaprenyl phosphate, yielding undecaprenyl-pyrophosphoryl-MurNAc-pentapeptide, known as lipid I. This chain is Phospho-N-acetylmuramoyl-pentapeptide-transferase, found in Prochlorococcus marinus (strain MIT 9215).